We begin with the raw amino-acid sequence, 289 residues long: Phospholipase A1 (289 aa).

Residues 1-20 (MRTGPGWLLAAAALPFFACA) form the signal peptide. At 21–52 (QEATIDKVHDTPAVRGSIIANMLQEHDNPFTL) the chain is on the periplasmic side. Residues 53-65 (YPYESNYLLYTYT) traverse the membrane as a beta stranded segment. Topologically, residues 66 to 84 (SDLNKKAIESYNWSDNANK) are extracellular. Residues 85-99 (DEVKFQLSLAFPLWR) form a beta stranded membrane-spanning segment. Topologically, residues 100–105 (GILGDN) are periplasmic. A beta stranded membrane pass occupies residues 106–118 (SLLGASYTQRSWW). Residues 119–128 (QLSNTGESAP) are Extracellular-facing. S126 is a binding site for Ca(2+). The chain crosses the membrane as a beta stranded span at residues 129–148 (FRETNYEPQLFLGFATDYSV). Residues 149–150 (GD) lie on the Periplasmic side of the membrane. A beta stranded membrane pass occupies residues 151-164 (WTLRDAEFGYNHQS). H162 acts as the Proton acceptor in catalysis. Catalysis depends on S164, which acts as the Nucleophile. Over 165-173 (NGRSDPTSR) the chain is Extracellular. Ca(2+) is bound by residues R167 and S172. A beta stranded transmembrane segment spans residues 174 to 186 (SWNRLYSRLMAQN). The Periplasmic segment spans residues 187–188 (GN). Residues 189-198 (WLVEVKPWYV) form a beta stranded membrane-spanning segment. Residues 199–216 (IGDTSDNKNITKYMGYYQ) are Extracellular-facing. D204 contacts Ca(2+). A beta stranded transmembrane segment spans residues 217–223 (LKIGYQL). Residues 224 to 225 (GE) lie on the Periplasmic side of the membrane. The beta stranded transmembrane segment at 226 to 234 (AVLSAKGQY) threads the bilayer. Residues 235–241 (NWNTGYG) lie on the Extracellular side of the membrane. The beta stranded transmembrane segment at 242 to 250 (GAELGVSYP) threads the bilayer. The Periplasmic segment spans residues 251–255 (ITKHV). The chain crosses the membrane as a beta stranded span at residues 256-265 (RFYTQVYSGY). Topologically, residues 266–274 (GESLIDYDF) are extracellular. The chain crosses the membrane as a beta stranded span at residues 275-286 (NQTRVGMGVMLN). Topologically, residues 287–289 (DLF) are periplasmic.

This sequence belongs to the phospholipase A1 family. As to quaternary structure, homodimer; dimerization is reversible, and the dimeric form is the active one. Ca(2+) is required as a cofactor.

It is found in the cell outer membrane. It carries out the reaction a 1,2-diacyl-sn-glycero-3-phosphocholine + H2O = a 2-acyl-sn-glycero-3-phosphocholine + a fatty acid + H(+). The catalysed reaction is a 1,2-diacyl-sn-glycero-3-phosphocholine + H2O = a 1-acyl-sn-glycero-3-phosphocholine + a fatty acid + H(+). Functionally, hydrolysis of phosphatidylcholine with phospholipase A2 (EC 3.1.1.4) and phospholipase A1 (EC 3.1.1.32) activities. This is Phospholipase A1 (pldA) from Proteus vulgaris.